A 133-amino-acid chain; its full sequence is Salivary cystatin-L (133 aa).

The N-terminal stretch at 1–19 is a signal peptide; it reads MTSSFALVLLLGGVAVCVA. A Cystatin domain is found at 30-117; that stretch reads ANHQANPEFL…HRTCTTVVFE (88 aa). 2 disulfides stabilise this stretch: Cys-89/Cys-100 and Cys-111/Cys-130.

Belongs to the cystatin family. Monomer. Can form homodimers in vitro, but probably not in vivo. Homodimers are predicted to be inactive; dimerization disrupts the interaction with target proteases.

The protein resides in the secreted. Its function is as follows. Inhibitor of cysteine proteinases. Inhibits host immune responses via its inhibition of host cathepsins. Contributes to the suppression of the host's immune response to tick salivary proteins and is important for successful feeding on hosts. Inhibits differentiation of host dendritic cells. Inhibits proliferation of host T-cells in response to antigen stimulus. Down-regulates TLR2-mediated host responses to infection by B.burgdorferi and the production of the chemokine CCL3 by host dendritic cells. Down-regulates host responses to infection by B.burgdorferi and the production of IFNB1 by host dendritic cells. Down-regulates IL1B production by host mast cells, and this then leads to impaired activation of IL1R1, resulting in decreased IL9 production. Inhibits host inflammatory reactions and recruitment of host neutrophils. Inhibits papain and cathepsin L (CTSL) (in vitro). Inhibits cathepsin S (CTSS) (in vitro). Inhibits CTSV and CTSC, but to a lesser degree (in vitro). The chain is Salivary cystatin-L from Ixodes scapularis (Black-legged tick).